The following is a 282-amino-acid chain: uncharacterized protein (282 aa).

In terms of domain architecture, HTH rpiR-type spans threonine 2–glutamine 78. A DNA-binding region (H-T-H motif) is located at residues valine 38–arginine 57. In terms of domain architecture, SIS spans alanine 122–asparagine 262.

This is an uncharacterized protein from Caldanaerobacter subterraneus subsp. tengcongensis (strain DSM 15242 / JCM 11007 / NBRC 100824 / MB4) (Thermoanaerobacter tengcongensis).